Here is a 465-residue protein sequence, read N- to C-terminus: Alpha-2A adrenergic receptor (465 aa).

Topologically, residues 1 to 48 (MFRQEQPLAEGSFAPMGSLQPDAGNSSWNGTEAPGGGTRATPYSLQVT) are extracellular. 2 N-linked (GlcNAc...) asparagine glycosylation sites follow: Asn-25 and Asn-29. A helical transmembrane segment spans residues 49–74 (LTLVCLAGLLMLFTVFGNVLVIIAVF). Topologically, residues 75–85 (TSRALKAPQNL) are cytoplasmic. The chain crosses the membrane as a helical span at residues 86 to 111 (FLVSLASADILVATLVIPFSLANEVM). The Extracellular segment spans residues 112 to 121 (GYWYFGKVWC). A disulfide bridge connects residues Cys-121 and Cys-203. The helical transmembrane segment at 122-144 (EIYLALDVLFCTSSIVHLCAISL) threads the bilayer. The Cytoplasmic segment spans residues 145–164 (DRYWSITQAIEYNLKRTPRR). Residues 165 to 188 (IKAIIVTVWVISAVISFPPLISIE) form a helical membrane-spanning segment. At 189–207 (KKGAGGGQQPAEPSCKIND) the chain is on the extracellular side. The chain crosses the membrane as a helical span at residues 208–232 (QKWYVISSSIGSFFAPCLIMILVYV). Over 233-389 (RIYQIAKRRT…RQNREKRFTF (157 aa)) the chain is Cytoplasmic. A disordered region spans residues 242 to 377 (TRVPPSRRGP…RAGGAKASRW (136 aa)). Basic and acidic residues predominate over residues 313–330 (SSEHAERPQGPGKPERGP). At Ser-346 the chain carries Phosphoserine. Positions 353-364 (GAAGPGASGSGQ) are enriched in gly residues. Arg-368 bears the Omega-N-methylarginine mark. A helical membrane pass occupies residues 390-414 (VLAVVIGVFVVCWFPFFFTYTLIAV). The Extracellular segment spans residues 415 to 424 (GCPVPYQLFN). The helical transmembrane segment at 425–445 (FFFWFGYCNSSLNPVIYTIFN) threads the bilayer. At 446-465 (HDFRRAFKKILCRGDRKRIV) the chain is on the cytoplasmic side. A lipid anchor (S-palmitoyl cysteine) is attached at Cys-457.

The protein belongs to the G-protein coupled receptor 1 family. Adrenergic receptor subfamily. ADRA2A sub-subfamily. As to expression, expressed in brain.

The protein resides in the cell membrane. Functionally, alpha-2 adrenergic receptors mediate the catecholamine-induced inhibition of adenylate cyclase through the action of G proteins. The polypeptide is Alpha-2A adrenergic receptor (Rattus norvegicus (Rat)).